Here is a 432-residue protein sequence, read N- to C-terminus: 3-phosphoshikimate 1-carboxyvinyltransferase (432 aa).

Positions 22, 23, and 27 each coordinate 3-phosphoshikimate. Lys-22 provides a ligand contact to phosphoenolpyruvate. Positions 96 and 127 each coordinate phosphoenolpyruvate. Positions 173, 174, 175, 201, 316, 339, and 343 each coordinate 3-phosphoshikimate. Gln-175 is a binding site for phosphoenolpyruvate. Asp-316 functions as the Proton acceptor in the catalytic mechanism. Phosphoenolpyruvate-binding residues include Arg-347, Arg-391, and Lys-416.

It belongs to the EPSP synthase family. Monomer.

The protein localises to the cytoplasm. The catalysed reaction is 3-phosphoshikimate + phosphoenolpyruvate = 5-O-(1-carboxyvinyl)-3-phosphoshikimate + phosphate. Its pathway is metabolic intermediate biosynthesis; chorismate biosynthesis; chorismate from D-erythrose 4-phosphate and phosphoenolpyruvate: step 6/7. In terms of biological role, catalyzes the transfer of the enolpyruvyl moiety of phosphoenolpyruvate (PEP) to the 5-hydroxyl of shikimate-3-phosphate (S3P) to produce enolpyruvyl shikimate-3-phosphate and inorganic phosphate. The polypeptide is 3-phosphoshikimate 1-carboxyvinyltransferase (Haemophilus influenzae (strain 86-028NP)).